The following is a 153-amino-acid chain: Interleukin-4 (153 aa).

Positions 1–24 are cleaved as a signal peptide; it reads MGLTSQLLPPLFFLLACAGNFVHG. Intrachain disulfides connect C27-C151, C48-C89, and C70-C123. The N-linked (GlcNAc...) asparagine glycan is linked to N62.

Belongs to the IL-4/IL-13 family.

It localises to the secreted. Its function is as follows. Participates in at least several B-cell activation processes as well as of other cell types. It is a costimulator of DNA-synthesis. It induces the expression of class II MHC molecules on resting B-cells. It enhances both secretion and cell surface expression of IgE and IgG1. It also regulates the expression of the low affinity Fc receptor for IgE (CD23) on both lymphocytes and monocytes. Positively regulates IL31RA expression in macrophages. Stimulates autophagy in dendritic cells by interfering with mTORC1 signaling and through the induction of RUFY4. The polypeptide is Interleukin-4 (IL4) (Macaca fascicularis (Crab-eating macaque)).